A 76-amino-acid chain; its full sequence is Brevinin-2ISa (76 aa).

The signal sequence occupies residues 1–22 (MFNMKKSLLLLFFLGTISLSLC). A propeptide spans 23 to 41 (EEERDADEDDGVEMTEEEV) (removed in mature form). Cys-70 and Cys-76 are joined by a disulfide.

As to expression, expressed by the skin glands.

It localises to the secreted. Its function is as follows. Has antimicrobial activity against Gram-negative bacterium E.coli ATCC 8739 (MIC=50 ug), against Gram positive bacteria S.aureus ATCC 6538 (MIC=12.5 ug), methicillin-resistant S.aureus ATCC 43300 (MIC=100 ug) and B.subtilis ATCC 6633 (MIC=12.5 ug). Has no activity against fungus C.albicans ATCC 90028. The polypeptide is Brevinin-2ISa (Odorrana ishikawae (Ishikawa's frog)).